The following is a 408-amino-acid chain: Putative glutamate--cysteine ligase 2 (408 aa).

The protein belongs to the glutamate--cysteine ligase type 2 family. YbdK subfamily.

The enzyme catalyses L-cysteine + L-glutamate + ATP = gamma-L-glutamyl-L-cysteine + ADP + phosphate + H(+). ATP-dependent carboxylate-amine ligase which exhibits weak glutamate--cysteine ligase activity. The protein is Putative glutamate--cysteine ligase 2 of Bradyrhizobium sp. (strain ORS 278).